The primary structure comprises 214 residues: Melanoregulin (214 aa).

Residues 162–172 (LSERYLFVVDR) carry the Cholesterol-binding sequence motif motif. The residue at position 213 (Ser213) is a Phosphoserine.

Belongs to the melanoregulin family. In terms of assembly, identified in a complex with RILP and DCTN1; interacts directly with RILP, but does not interact directly with DCTN1. Interacts with PRPH2. Palmitoylated. Palmitoylation is required to maintain the protein at the melanosome membrane. In terms of tissue distribution, expressed in photoreceptor cells (at protein level).

It is found in the apical cell membrane. The protein resides in the melanosome membrane. The protein localises to the lysosome membrane. It localises to the cytoplasmic vesicle membrane. Functionally, probably functions as a cargo-recognition protein that couples cytoplasmic vesicles to the transport machinery. Plays a role in hair pigmentation, a process that involves shedding of melanosome-containing vesicles from melanocytes, followed by phagocytosis of the melanosome-containing vesicles by keratinocytes. Functions on melanosomes as receptor for RILP and the complex formed by RILP and DCTN1, and thereby contributes to retrograde melanosome transport from the cell periphery to the center. Overexpression causes accumulation of late endosomes and/or lysosomes at the microtubule organising center (MTOC) at the center of the cell. Probably binds cholesterol and requires the presence of cholesterol in membranes to function in microtubule-mediated retrograde organelle transport. Binds phosphatidylinositol 3-phosphate, phosphatidylinositol 4-phosphate, phosphatidylinositol 5-phosphate and phosphatidylinositol 3,5-bisphosphate, but not phosphatidylinositol 3,4-bisphosphate or phosphatidylinositol 4,5-bisphosphate. Required for normal phagosome clearing and normal activation of lysosomal enzymes in lysosomes from retinal pigment epithelium cells. Required for normal degradation of the lipofuscin component N-retinylidene-N-retinylethanolamine (A2E) in the eye. May function in membrane fusion and regulate the biogenesis of disk membranes of photoreceptor rod cells. This chain is Melanoregulin (MREG), found in Homo sapiens (Human).